We begin with the raw amino-acid sequence, 393 residues long: Cytohesin-4 (393 aa).

The stretch at 13-56 forms a coiled coil; that stretch reads SGEAKELQQIKWHRKQLLEDIQKLKDEIADVFAQIDCFESTEES. The region spanning 54–241 is the SEC7 domain; that stretch reads EESRMAQKEK…RNLFDSIKSE (188 aa). The PH domain occupies 259 to 375; the sequence is NPDREGWLLK…WIEAIRASIT (117 aa). Residues 268-275, Arg-279, Tyr-290, and Arg-300 each bind a 1,2-diacyl-sn-glycero-3-phospho-(1D-myo-inositol-3,4,5-trisphosphate); that span reads KLGGRVKT. The tract at residues 386–393 is C-terminal autoinhibitory region; the sequence is RKKKIVGK.

It localises to the cell membrane. Promotes guanine-nucleotide exchange on ARF1 and ARF5. Promotes the activation of ARF factors through replacement of GDP with GTP. The protein is Cytohesin-4 (Cyth4) of Mus musculus (Mouse).